Consider the following 342-residue polypeptide: Biotin synthase (342 aa).

Positions 63–288 (PEVEVEGIIS…RTMLRFAGGR (226 aa)) constitute a Radical SAM core domain. The [4Fe-4S] cluster site is built by C78, C82, and C85. Residues C121, C154, C213, and R283 each contribute to the [2Fe-2S] cluster site.

The protein belongs to the radical SAM superfamily. Biotin synthase family. As to quaternary structure, homodimer. Requires [4Fe-4S] cluster as cofactor. [2Fe-2S] cluster serves as cofactor.

It carries out the reaction (4R,5S)-dethiobiotin + (sulfur carrier)-SH + 2 reduced [2Fe-2S]-[ferredoxin] + 2 S-adenosyl-L-methionine = (sulfur carrier)-H + biotin + 2 5'-deoxyadenosine + 2 L-methionine + 2 oxidized [2Fe-2S]-[ferredoxin]. It functions in the pathway cofactor biosynthesis; biotin biosynthesis; biotin from 7,8-diaminononanoate: step 2/2. Catalyzes the conversion of dethiobiotin (DTB) to biotin by the insertion of a sulfur atom into dethiobiotin via a radical-based mechanism. This chain is Biotin synthase, found in Mycobacteroides abscessus (strain ATCC 19977 / DSM 44196 / CCUG 20993 / CIP 104536 / JCM 13569 / NCTC 13031 / TMC 1543 / L948) (Mycobacterium abscessus).